Reading from the N-terminus, the 858-residue chain is Selenocysteine insertion sequence-binding protein 2 (858 aa).

Disordered stretches follow at residues 127-261, 275-296, and 327-625; these read KPRH…GDVG, SDHT…CTQE, and LKKT…DSAT. Basic and acidic residues-rich tracts occupy residues 147-166, 188-197, and 215-224; these read KPSD…RRAD, SSLKSDGYHK, and PEFEFSRLDF. 2 stretches are compositionally biased toward polar residues: residues 281-296 and 327-352; these read AVTS…CTQE and LKKT…NPSY. The Nuclear localization signal motif lies at 380 to 387; sequence KNKKKKEK. A compositionally biased stretch (basic residues) spans 418-429; the sequence is RRHRGQSPKLHS. Positions 430–447 are enriched in polar residues; that stretch reads KQQTQNEFKTSGKKSQVP. The span at 539-548 shows a compositional bias: basic and acidic residues; that stretch reads ILKERQERMQ. 2 stretches are compositionally biased toward polar residues: residues 554–563 and 571–582; these read SAVSLTVASD and GASNQTPSQDNP. Residues 678 to 699 form an RNA-binding region; sequence LVLGLREVLKHLKLRKLKCIII. The disordered stretch occupies residues 785–819; that stretch reads MRQEQAGEPGPQSPPSPPMQDPIPSTEEGTLPSTG. Pro residues predominate over residues 795 to 805; it reads PQSPPSPPMQD.

Its subcellular location is the cytoplasm. The protein localises to the nucleus. Its function is as follows. mRNA-binding protein that binds to the SECIS (selenocysteine insertion sequence) element present in the 3'-UTR of mRNAs encoding selenoproteins and facilitates the incorporation of the rare amino acid selenocysteine. Insertion of selenocysteine at UGA codons is mediated by SECISBP2 and EEFSEC: SECISBP2 (1) specifically binds the SECIS sequence once the 80S ribosome encounters an in-frame UGA codon and (2) contacts the RPS27A/eS31 of the 40S ribosome before ribosome stalling. (3) GTP-bound EEFSEC then delivers selenocysteinyl-tRNA(Sec) to the 80S ribosome and adopts a preaccommodated state conformation. (4) After GTP hydrolysis, EEFSEC dissociates from the assembly, selenocysteinyl-tRNA(Sec) accommodates, and peptide bond synthesis and selenoprotein elongation occur. This chain is Selenocysteine insertion sequence-binding protein 2, found in Mus musculus (Mouse).